Consider the following 557-residue polypeptide: Dicarboxylate transporter 1, chloroplastic (557 aa).

The N-terminal 69 residues, 1–69 (MASLALSGSC…STLVKASSTV (69 aa)), are a transit peptide targeting the chloroplast. A run of 12 helical transmembrane segments spans residues 90–110 (AAIK…FVPV), 122–142 (LAIF…LGAV), 158–178 (FAAA…LAFF), 229–249 (AGGI…SNVG), 256–276 (LGSW…SMFL), 305–325 (AAIV…YLIY), 355–375 (IMAA…KLGV), 376–396 (DAVT…VVTW), 411–431 (WFAA…IEWF), 438–458 (FVGG…LLYF), 477–497 (AFLS…LVLA), and 531–551 (YGFL…GAWW).

The protein belongs to the SLC13A/DASS transporter (TC 2.A.47) family. DIT1 subfamily. Expressed in roots, rosette and cauline leaves, stems, flowers and siliques.

The protein localises to the plastid. It localises to the chloroplast inner membrane. In terms of biological role, 2-oxoglutarate/malate translocator involved with DIT2-1 in primary ammonia assimilation and in the re-assimilation of ammonia generated by the photorespiratory pathway. Imports 2-oxoglutarate into plastids as precursor for ammonia assimilation. 2-oxoglutarate is converted to glutamate, the end product of ammonia assimilation, which is exported to the cytosol by DIT2-1. The sequence is that of Dicarboxylate transporter 1, chloroplastic (DIT1) from Arabidopsis thaliana (Mouse-ear cress).